Here is a 54-residue protein sequence, read N- to C-terminus: Small polypeptide DEVIL 12 (54 aa).

Residues 20–51 (NNKLTPNRSLKETRSRLYIIRRCLVMLLCWRE) are required for DVL/RTFL small polypeptide activity. Residue Asn26 is glycosylated (N-linked (GlcNAc...) asparagine). The chain crosses the membrane as a helical span at residues 31–48 (ETRSRLYIIRRCLVMLLC).

The protein belongs to the DVL/RTFL small polypeptides family.

Its subcellular location is the cell membrane. Functionally, small polypeptide acting as a regulatory molecule which coordinates cellular responses required for differentiation, growth and development, probably by restricting polar cell proliferation in lateral organs and coordinating socket cell recruitment and differentiation at trichome sites. This Arabidopsis thaliana (Mouse-ear cress) protein is Small polypeptide DEVIL 12.